The primary structure comprises 395 residues: Protein pelota (395 aa).

Residues 210–212 (PGF) carry the PGF motif motif. The interval 371-395 (PELEDSDDDDDEDGAAGGVADSDSD) is disordered. Residues 372–384 (ELEDSDDDDDEDG) show a composition bias toward acidic residues.

This sequence belongs to the eukaryotic release factor 1 family. Pelota subfamily. In terms of assembly, component of the Pelota-HBS1L complex, also named Dom34-Hbs1 complex, composed of pelo and HBS1. Interacts with Pink1 and Cnot4; the interaction with Cnot4 appears to be Pink1-dependent. A divalent metal cation is required as a cofactor. As to expression, expressed in ovaries and muscles (at protein level). Expressed throughout all development stages.

It is found in the nucleus. It localises to the cytoplasm. Functionally, component of the Pelota-HBS1L complex, a complex that recognizes stalled ribosomes and triggers the No-Go Decay (NGD) pathway. In the Pelota-HBS1L complex, pelo recognizes ribosomes stalled at the 3' end of an mRNA and engages stalled ribosomes by destabilizing mRNA in the mRNA channel. Following ribosome-binding, the Pelota-HBS1L complex promotes recruitment of pix, which drives the disassembly of stalled ribosomes, followed by degradation of damaged mRNAs as part of the NGD pathway. Required prior to the first meiotic division for spindle formation and nuclear envelope breakdown during spermatogenesis. Together with HBS1, promotes spermatid individualization during spermatogenesis. Required for ovarian germ line stem cell self-renewal and oocyte development during oogenesis. Together with HSB1, required for transposon silencing in the ovary and testis. As part of the Pink1-regulated signaling, is recruited to damaged mitochondrial and is required for recruitment of autophagy receptors and induction of mitophagy. Required for normal eye patterning and for mitotic divisions in the ovary. The polypeptide is Protein pelota (pelo) (Drosophila melanogaster (Fruit fly)).